Here is a 179-residue protein sequence, read N- to C-terminus: uncharacterized protein (179 aa).

Belongs to the CAPAB/TerDEXZ family.

This is an uncharacterized protein from Synechocystis sp. (strain ATCC 27184 / PCC 6803 / Kazusa).